Here is a 381-residue protein sequence, read N- to C-terminus: Cytochrome b (381 aa).

4 consecutive transmembrane segments (helical) span residues 34–54 (FGSH…FLAM), 78–99 (WLIR…YLHI), 114–134 (WNIG…GYVL), and 179–199 (FFAF…IHLL). Residues histidine 84 and histidine 98 each contribute to the heme b site. The heme b site is built by histidine 183 and histidine 197. Histidine 202 serves as a coordination point for a ubiquinone. The next 4 helical transmembrane spans lie at 227–247 (YKDL…ALFM), 289–309 (LGGV…PLLH), 321–341 (MTQI…WIGG), and 348–368 (FIMV…IIMP).

Belongs to the cytochrome b family. As to quaternary structure, the cytochrome bc1 complex contains 3 respiratory subunits (MT-CYB, CYC1 and UQCRFS1), 2 core proteins (UQCRC1 and UQCRC2) and probably 6 low-molecular weight proteins. Heme b serves as cofactor.

The protein localises to the mitochondrion inner membrane. Its function is as follows. Component of the ubiquinol-cytochrome c reductase complex (complex III or cytochrome b-c1 complex) that is part of the mitochondrial respiratory chain. The b-c1 complex mediates electron transfer from ubiquinol to cytochrome c. Contributes to the generation of a proton gradient across the mitochondrial membrane that is then used for ATP synthesis. The protein is Cytochrome b (mt-cyb) of Carcharhinus porosus (Smalltail shark).